Here is a 257-residue protein sequence, read N- to C-terminus: 8-demethyl-8-aminoriboflavin-5'-phosphate synthase (257 aa).

Residues threonine 11–arginine 13, serine 19–threonine 21, isoleucine 91–asparagine 94, cysteine 132–aspartate 136, and tyrosine 240 contribute to the FMN site.

The protein belongs to the SsuE family. In terms of assembly, homotetramer.

The enzyme catalyses FMN + L-glutamate + 3 A + O2 + H2O = 8-amino-8-demethylriboflavin 5'-phosphate + 2-oxoglutarate + 3 AH2 + CO2 + H(+). Its pathway is antibiotic biosynthesis. Involved in the biosynthesis of the riboflavin analog antibiotic roseoflavin (3,8-dimethylamino-riboflavin). Catalyzes the site-specific substitution of the C-8 methyl group of riboflavin-5'-phosphate (FMN) by an amino group to yield 8-amino-8-demethylriboflavin 5'-phosphate, via a combined oxidation, decarboxylation and transamination reaction. The catalysis is initiated by an oxidation step in which the C-8 methyl group on the dimethylbenzene ring of FMN is converted to a formyl group to yield the 8-demethyl-8-formylriboflavin-5'-phosphate (OHC-RP) intermediate. In the presence of thiamine, the formyl group is oxidized into a carboxyl group to yield the 8-demethyl-8-carboxyriboflavin-5'-phosphate (HO2C-RP) intermediate. Finally, in the presence of L-glutamate as an amino donor, decarboxylation and aminotransfer occur, resulting in production of 8-demethyl-8-aminoriboflavin-5'-phosphate. Addition of NAD (but not NADP) to the reaction increases the yield 1.7-fold. The reaction also proceeds without the addition of any electron acceptor, and it is possible that molecular oxygen serves this role. The protein is 8-demethyl-8-aminoriboflavin-5'-phosphate synthase of Streptomyces davaonensis (strain DSM 101723 / JCM 4913 / KCC S-0913 / 768).